A 452-amino-acid chain; its full sequence is mRNA export factor ICP27 homolog (452 aa).

Positions 42–164 (EAIGSTPGED…RNDQTHDESY (123 aa)) are disordered. Positions 98–107 (SNHHGGRDVE) are enriched in basic and acidic residues. Over residues 129–144 (SRKHRDRSLSNRRRRP) the composition is skewed to basic residues. Over residues 154 to 164 (ERNDQTHDESY) the composition is skewed to basic and acidic residues. Cys335, His417, Cys421, and Cys426 together coordinate Zn(2+). Residues 335–426 (CLLLNRDNDL…HQRECGRVEC (92 aa)) form a CHC2-type zinc finger.

This sequence belongs to the HHV-1 ICP27 protein family. As to quaternary structure, homodimer. Homodimerization is required for transactivation. Associates in a complex with RNA, and host export factors NXF1/TAP and ALYREF; these interactions allow nuclear export of viral transcripts. Interacts with three host shuttling SR proteins SRSF1, SRSF3 and SRSF7. Interacts with host SRPK1. Interacts with IE62; this interaction enhances IE62 transactivation. In terms of processing, phosphorylated in vitro by SRPK1.

Its subcellular location is the host cytoplasm. The protein resides in the host nucleus. Functionally, multifunctional regulator of the expression of viral genes that mediates nuclear export of viral intronless mRNAs. This immediate early (EI) protein promotes the nuclear export of viral intronless mRNAs by interacting with mRNAs and host NXF1/TAP. In Varicella-zoster virus (strain Dumas) (HHV-3), this protein is mRNA export factor ICP27 homolog.